The following is a 453-amino-acid chain: O-methyltransferase bik3 (453 aa).

Positions 1–25 (MVSNGISNGTNGTNGTTTNGTNGVN) are disordered. Residues 8–25 (NGTNGTNGTTTNGTNGVN) are compositionally biased toward low complexity. D305 is a binding site for S-adenosyl-L-methionine. H355 (proton acceptor) is an active-site residue.

The protein belongs to the class I-like SAM-binding methyltransferase superfamily. Cation-independent O-methyltransferase family. COMT subfamily.

Its pathway is secondary metabolite biosynthesis. Its function is as follows. O-methyltransferase; part of the gene cluster that mediates the biosynthesis of bikaverin, a red pigment also considered as a mycotoxin. The first stage is catalyzed by the polyketide synthase bik1, which catalyzes the formation of the intermediate SMA76a also knowm as pre-bikaverin. FAD-dependent monooxygenase bik2 might then be responsible for the oxidation of pre-bikaverin to oxo-pre-bikaverin which is in turn methylated by the O-methyltransferase bik3 to me-oxo-pre-bikaverin. A further cycle of oxydation and methylation by bik2 and bik3 leads to the final product of bikaverin, via a nor-bikaverin intermediate. This Gibberella fujikuroi (strain CBS 195.34 / IMI 58289 / NRRL A-6831) (Bakanae and foot rot disease fungus) protein is O-methyltransferase bik3.